We begin with the raw amino-acid sequence, 245 residues long: MLQFTPPLQPATLILRYKRFLADIVTPAGEALTIHCANTGAMTGCATPGDTIWYSTSDNPKRKYPQSWELTQTQTGDWICVNTMRANELVNLAIEKNQIAELSGYNFVRKEVKYGEENSRIDLLLQAEDRRDCYIEVKSVTLLQQQCGYFPDAVTLRGQKHLRELQNRVVNGHRAVLFFAVLHTGIKQVAPARHIDRRYAELLVQAQQAGVEVICYGFQLSPDGIELNTRLPLLLDEMLSSENAE.

This sequence belongs to the SfsA family.

The sequence is that of Sugar fermentation stimulation protein homolog from Yersinia pestis bv. Antiqua (strain Nepal516).